Here is a 320-residue protein sequence, read N- to C-terminus: Ribosomal RNA small subunit methyltransferase H (320 aa).

Residues 36–38 (GGH), D56, F82, D103, and Q110 contribute to the S-adenosyl-L-methionine site.

The protein belongs to the methyltransferase superfamily. RsmH family.

The protein resides in the cytoplasm. It carries out the reaction cytidine(1402) in 16S rRNA + S-adenosyl-L-methionine = N(4)-methylcytidine(1402) in 16S rRNA + S-adenosyl-L-homocysteine + H(+). Specifically methylates the N4 position of cytidine in position 1402 (C1402) of 16S rRNA. The polypeptide is Ribosomal RNA small subunit methyltransferase H (Chromobacterium violaceum (strain ATCC 12472 / DSM 30191 / JCM 1249 / CCUG 213 / NBRC 12614 / NCIMB 9131 / NCTC 9757 / MK)).